The sequence spans 214 residues: Protein OPG176 (214 aa).

Belongs to the orthopoxvirus OPG176 family. Tetramer. Interacts with host MYD88, TRF4, TICAM2 and MAL.

Its function is as follows. BCL2-like protein which disrupts the host immune response by inhibiting the TLR4 signaling pathway leading to NF-kappa-B activation. Acts close to the plasma membrane and targets several host TIR-domain containing adapter proteins including MYD88, TIRAP, TRIF and TICAM2. In turn, blocks the host NF-kappa-B and TRIF-mediated IRF3 activation. The chain is Protein OPG176 (OPG176) from Homo sapiens (Human).